The chain runs to 261 residues: Cytochrome c oxidase subunit 3 (261 aa).

Residues 1-15 (MAHQAHAYHMVDPSP) lie on the Mitochondrial matrix side of the membrane. A helical membrane pass occupies residues 16–34 (WPITGATAALLVTSGLAAW). Residues 35-40 (FHFNSM) lie on the Mitochondrial intermembrane side of the membrane. Residues 41–66 (ILILMGLTLLLLTMYQWWRDIIREST) form a helical membrane-spanning segment. Topologically, residues 67–72 (FQGHHT) are mitochondrial matrix. The chain crosses the membrane as a helical span at residues 73-105 (LPVQKSLRYGMILFITSEVFFFLGFFWAFYHSS). The Mitochondrial intermembrane portion of the chain corresponds to 106-128 (LAPTPELGGLWPPTGITPLDPFE). A helical membrane pass occupies residues 129–152 (VPLLNTAVLLASGITVTWAHHSLM). Residues 153–155 (EGQ) are Mitochondrial matrix-facing. The helical transmembrane segment at 156-183 (RKEAIQSLFITVLLGLYFTALQATEYYE) threads the bilayer. At 184-190 (SPFTIAD) the chain is on the mitochondrial intermembrane side. The chain crosses the membrane as a helical span at residues 191 to 223 (GAYGSTFFVATGFHGLHVIIGSTFLIVCLVRQT). Topologically, residues 224–232 (QYHFTSNHH) are mitochondrial matrix. The chain crosses the membrane as a helical span at residues 233-256 (FGFEAAAWYWHFVDVVWLFLYVSI). Topologically, residues 257–261 (YWWGS) are mitochondrial intermembrane.

The protein belongs to the cytochrome c oxidase subunit 3 family. As to quaternary structure, component of the cytochrome c oxidase (complex IV, CIV), a multisubunit enzyme composed of 14 subunits. The complex is composed of a catalytic core of 3 subunits MT-CO1, MT-CO2 and MT-CO3, encoded in the mitochondrial DNA, and 11 supernumerary subunits COX4I, COX5A, COX5B, COX6A, COX6B, COX6C, COX7A, COX7B, COX7C, COX8 and NDUFA4, which are encoded in the nuclear genome. The complex exists as a monomer or a dimer and forms supercomplexes (SCs) in the inner mitochondrial membrane with NADH-ubiquinone oxidoreductase (complex I, CI) and ubiquinol-cytochrome c oxidoreductase (cytochrome b-c1 complex, complex III, CIII), resulting in different assemblies (supercomplex SCI(1)III(2)IV(1) and megacomplex MCI(2)III(2)IV(2)).

The protein localises to the mitochondrion inner membrane. The catalysed reaction is 4 Fe(II)-[cytochrome c] + O2 + 8 H(+)(in) = 4 Fe(III)-[cytochrome c] + 2 H2O + 4 H(+)(out). Its function is as follows. Component of the cytochrome c oxidase, the last enzyme in the mitochondrial electron transport chain which drives oxidative phosphorylation. The respiratory chain contains 3 multisubunit complexes succinate dehydrogenase (complex II, CII), ubiquinol-cytochrome c oxidoreductase (cytochrome b-c1 complex, complex III, CIII) and cytochrome c oxidase (complex IV, CIV), that cooperate to transfer electrons derived from NADH and succinate to molecular oxygen, creating an electrochemical gradient over the inner membrane that drives transmembrane transport and the ATP synthase. Cytochrome c oxidase is the component of the respiratory chain that catalyzes the reduction of oxygen to water. Electrons originating from reduced cytochrome c in the intermembrane space (IMS) are transferred via the dinuclear copper A center (CU(A)) of subunit 2 and heme A of subunit 1 to the active site in subunit 1, a binuclear center (BNC) formed by heme A3 and copper B (CU(B)). The BNC reduces molecular oxygen to 2 water molecules using 4 electrons from cytochrome c in the IMS and 4 protons from the mitochondrial matrix. The sequence is that of Cytochrome c oxidase subunit 3 (MT-CO3) from Latimeria chalumnae (Coelacanth).